The chain runs to 365 residues: tRNA N6-adenosine threonylcarbamoyltransferase (365 aa).

Residues His122 and His126 each contribute to the Fe cation site. Substrate-binding positions include 147-151 (LVSGG), Asp180, Gly193, and Asn293. Asp321 contacts Fe cation. The interval 340–365 (PNEIDTAARPRWPLSERTPATPEHVS) is disordered.

This sequence belongs to the KAE1 / TsaD family. Fe(2+) serves as cofactor.

The protein localises to the cytoplasm. It carries out the reaction L-threonylcarbamoyladenylate + adenosine(37) in tRNA = N(6)-L-threonylcarbamoyladenosine(37) in tRNA + AMP + H(+). Functionally, required for the formation of a threonylcarbamoyl group on adenosine at position 37 (t(6)A37) in tRNAs that read codons beginning with adenine. Is involved in the transfer of the threonylcarbamoyl moiety of threonylcarbamoyl-AMP (TC-AMP) to the N6 group of A37, together with TsaE and TsaB. TsaD likely plays a direct catalytic role in this reaction. This is tRNA N6-adenosine threonylcarbamoyltransferase from Gluconobacter oxydans (strain 621H) (Gluconobacter suboxydans).